Consider the following 122-residue polypeptide: Autophagy-related protein 8a (122 aa).

Residues 1-21 (MAKSSFKISNPLEARMSESSR) are disordered. Gly117 is lipidated: Phosphatidylethanolamine amidated glycine. Positions 118-122 (SLTVA) are cleaved as a propeptide — removed in mature form.

Belongs to the ATG8 family. In terms of assembly, interacts with ATG4B. Interacts with NBR1. The C-terminal 5 residues are removed by ATG4 to expose Gly-117 at the C-terminus. This Gly-117 forms then a thioester bond with the 'Cys-558' of ATG7 (E1-like activating enzyme) before being transferred to the 'Cys-258' of ATG3 (the specific E2 conjugating enzyme), in order to be finally amidated with phosphatidylethanolamine. This lipid modification anchors ATG8 to autophagosomes. Constitutively expressed.

The protein resides in the cytoplasmic vesicle. It localises to the autophagosome membrane. The protein localises to the vacuole membrane. It is found in the cytoplasm. Its subcellular location is the cytoskeleton. Functionally, ubiquitin-like modifier involved in autophagosomes formation. May mediate the delivery of the autophagosomes to the vacuole via the microtubule cytoskeleton. This Arabidopsis thaliana (Mouse-ear cress) protein is Autophagy-related protein 8a (ATG8A).